The chain runs to 304 residues: Ornithine carbamoyltransferase (304 aa).

Carbamoyl phosphate-binding positions include serine 47–threonine 50, arginine 98, and histidine 125–glutamine 128. L-ornithine-binding positions include asparagine 156, aspartate 221, and serine 225–methionine 226. Carbamoyl phosphate contacts are provided by residues cysteine 262–leucine 263 and arginine 290.

The protein belongs to the aspartate/ornithine carbamoyltransferase superfamily. OTCase family.

It is found in the cytoplasm. The enzyme catalyses carbamoyl phosphate + L-ornithine = L-citrulline + phosphate + H(+). Its pathway is amino-acid biosynthesis; L-arginine biosynthesis; L-arginine from L-ornithine and carbamoyl phosphate: step 1/3. Functionally, reversibly catalyzes the transfer of the carbamoyl group from carbamoyl phosphate (CP) to the N(epsilon) atom of ornithine (ORN) to produce L-citrulline. This is Ornithine carbamoyltransferase from Methanococcus maripaludis (strain C5 / ATCC BAA-1333).